The primary structure comprises 86 residues: U15-lycotoxin-Ls1d (86 aa).

The first 20 residues, 1-20, serve as a signal peptide directing secretion; it reads MNSKIFAVLLLLALLSCVLS. The 46-residue stretch at 21–66 folds into the WAP domain; it reads DQYCPKSSITACKKMNIRNDCCKDDDCTGGSWCCATPCGNFCKYPT. Intrachain disulfides connect Cys24/Cys54, Cys32/Cys58, Cys41/Cys53, Cys42/Cys80, and Cys47/Cys62.

It belongs to the venom protein 11 family. 01 (wap-1) subfamily. In terms of processing, contains 5 disulfide bonds. As to expression, expressed by the venom gland.

It localises to the secreted. Has antibacterial activity. The protein is U15-lycotoxin-Ls1d of Lycosa singoriensis (Wolf spider).